Consider the following 317-residue polypeptide: Melanocyte-stimulating hormone receptor (317 aa).

Over residues 1–20 (MPVQGSQRSLLGAVNSTPTA) the composition is skewed to polar residues. A disordered region spans residues 1-23 (MPVQGSQRSLLGAVNSTPTATPH). Topologically, residues 1–37 (MPVQGSQRSLLGAVNSTPTATPHLRPAANQTGPQCLE) are extracellular. Residue asparagine 29 is glycosylated (N-linked (GlcNAc...) asparagine). Residues 38 to 63 (VSIPDGLFLCLGLVSLVENTLVVAAI) form a helical membrane-spanning segment. The Cytoplasmic portion of the chain corresponds to 64–72 (AKNRNLHSP). A helical transmembrane segment spans residues 73 to 93 (MYCFICCLALSDLLVSVSSVL). Residues 94 to 118 (ETAVLLLLGAGALAAQATVVQQLGN) are Extracellular-facing. Residues 119 to 140 (VIDVLLCSSMVSSLFFLGAIAM) form a helical membrane-spanning segment. The Cytoplasmic portion of the chain corresponds to 141–163 (DRYISIFYALRYHSIVTLARARR). Residues 164–183 (AIAAIWAASILSSTLFIAYC) form a helical membrane-spanning segment. Topologically, residues 184–191 (DRTAALLC) are extracellular. Residues 192-211 (LVVFFLAMLVLMAVLYVHML) form a helical membrane-spanning segment. The Cytoplasmic portion of the chain corresponds to 212 to 240 (TQARQHAQGIARLHKRQRPVQQGWGLKGA). The helical transmembrane segment at 241 to 266 (ATLTILLGVFFLCWGPFFLHLTLIAV) threads the bilayer. At 267 to 279 (CPQHPTCSCIFKN) the chain is on the extracellular side. A helical membrane pass occupies residues 280 to 300 (FRLFLALIVCNAIVDPLIYAF). Topologically, residues 301–317 (RSQELRKTLKEVLLFFW) are cytoplasmic.

Belongs to the G-protein coupled receptor 1 family. As to quaternary structure, interacts with MGRN1, but does not undergo MGRN1-mediated ubiquitination; this interaction competes with GNAS-binding and thus inhibits agonist-induced cAMP production. Interacts with OPN3; the interaction results in a decrease in MC1R-mediated cAMP signaling and ultimately a decrease in melanin production in melanocytes.

The protein localises to the cell membrane. In terms of biological role, receptor for MSH (alpha, beta and gamma) and ACTH. The activity of this receptor is mediated by G proteins which activate adenylate cyclase. Mediates melanogenesis, the production of eumelanin (black/brown) and phaeomelanin (red/yellow), via regulation of cAMP signaling in melanocytes. This Lemur catta (Ring-tailed lemur) protein is Melanocyte-stimulating hormone receptor (MC1R).